We begin with the raw amino-acid sequence, 1405 residues long: Protein translocase subunit SecA (1405 aa).

Residues 1–1099 form a protein translocase subunit SecA region; the sequence is MHMKIKKFKK…SDYKKLNEDE (1099 aa). Residues Gln88, 106-110, and Asp494 contribute to the ATP site; that span reads GEGKS. Residues 1100–1405 are unknown; the sequence is SDDDIKAFYK…LDYLKENNKK (306 aa).

It belongs to the SecA family. Monomer and homodimer. Part of the essential Sec protein translocation apparatus which comprises SecA, SecYEG and auxiliary proteins SecDF. Other proteins may also be involved.

Its subcellular location is the cell membrane. The protein localises to the cytoplasm. It carries out the reaction ATP + H2O + cellular proteinSide 1 = ADP + phosphate + cellular proteinSide 2.. Functionally, part of the Sec protein translocase complex. Interacts with the SecYEG preprotein conducting channel. Has a central role in coupling the hydrolysis of ATP to the transfer of proteins into and across the cell membrane, serving as an ATP-driven molecular motor driving the stepwise translocation of polypeptide chains across the membrane. The chain is Protein translocase subunit SecA from Malacoplasma penetrans (strain HF-2) (Mycoplasma penetrans).